A 359-amino-acid polypeptide reads, in one-letter code: 3-dehydroquinate synthase (359 aa).

Residues 69 to 74 (DAEDGK), 103 to 107 (GAVTD), 127 to 128 (TT), Lys140, and Lys149 each bind NAD(+). Residues Glu182, His244, and His260 each coordinate Zn(2+).

Belongs to the sugar phosphate cyclases superfamily. Dehydroquinate synthase family. NAD(+) is required as a cofactor. Co(2+) serves as cofactor. The cofactor is Zn(2+).

It localises to the cytoplasm. The catalysed reaction is 7-phospho-2-dehydro-3-deoxy-D-arabino-heptonate = 3-dehydroquinate + phosphate. The protein operates within metabolic intermediate biosynthesis; chorismate biosynthesis; chorismate from D-erythrose 4-phosphate and phosphoenolpyruvate: step 2/7. Functionally, catalyzes the conversion of 3-deoxy-D-arabino-heptulosonate 7-phosphate (DAHP) to dehydroquinate (DHQ). The protein is 3-dehydroquinate synthase of Corynebacterium pseudotuberculosis (strain C231).